Consider the following 547-residue polypeptide: MLKRFLKRPVLGQIAWLLLFSFYIAVCLNIAFYKQVLQDLPLNSLRNVLVFISMPVVAFSVVNSVLTLASFIWLNRLLACVFILVGAAAQYFILTYGIIIDRSMIANMMDTTPAETFALMTPQMVLTLGLSGVLAAVIAFWVKIRPATPRLRSGLYRLASVLISILLVILVAAFFYKDYASLFRNNKQLIKALSPSNSIVASWSWYSHQRLANLPLVRIGEDAHRNPLMLKGDRKNLTILIVGETSRGDDFSLGGYPRDTNPRLAKDDVIYFPHTTSCGTATAISVPCMFSDMPRKHYDEELAHHQEGLLDIIQRAGINVLWNDNDGGCKGACDRVPHQNVTELNLPGQCIDGECYDEVLFHGLEDYIDHLKGDGVIVLHTIGSHGPTYYNRYPPQFKKFTPTCDTNEIQNCSQEQLINTYDNTVLYVDYIVDKAINLLKSHQDKFTTSLVYLSDHGESLGENGVYLHGLPYSIAPDTQKHVPMLIWLSKDYQQRYQVDQACLQKRASTLDYSQDNLFSTMLGLTGVQTTYYQAADDILQPCRRLSE.

Residues Met-1 to Pro-9 are Cytoplasmic-facing. A helical transmembrane segment spans residues Val-10–Ile-30. Topologically, residues Ala-31 to Asn-47 are periplasmic. The helical transmembrane segment at Val-48 to Leu-68 threads the bilayer. The Cytoplasmic portion of the chain corresponds to Ala-69–Ala-79. Residues Cys-80–Ile-100 form a helical membrane-spanning segment. Residues Asp-101–Gln-123 are Periplasmic-facing. A helical membrane pass occupies residues Met-124–Ile-144. Over Arg-145 to Gly-154 the chain is Cytoplasmic. Residues Leu-155 to Phe-175 form a helical membrane-spanning segment. Over Tyr-176–Glu-547 the chain is Periplasmic.

Belongs to the phosphoethanolamine transferase family. EptA subfamily.

Its subcellular location is the cell inner membrane. Its pathway is bacterial outer membrane biogenesis; LPS lipid A biosynthesis. Its function is as follows. Catalyzes the addition of a phosphoethanolamine moiety to the lipid A. The phosphoethanolamine modification is required for resistance to polymyxin. In Salmonella typhimurium (strain LT2 / SGSC1412 / ATCC 700720), this protein is Phosphoethanolamine transferase EptA (eptA).